The primary structure comprises 365 residues: Chorismate synthase (365 aa).

Arg-46 provides a ligand contact to NADP(+). Residues 123–125 (RSS), 241–242 (NG), Gly-281, 296–300 (KPTPS), and Arg-322 each bind FMN.

This sequence belongs to the chorismate synthase family. In terms of assembly, homotetramer. FMNH2 serves as cofactor.

The catalysed reaction is 5-O-(1-carboxyvinyl)-3-phosphoshikimate = chorismate + phosphate. Its pathway is metabolic intermediate biosynthesis; chorismate biosynthesis; chorismate from D-erythrose 4-phosphate and phosphoenolpyruvate: step 7/7. In terms of biological role, catalyzes the anti-1,4-elimination of the C-3 phosphate and the C-6 proR hydrogen from 5-enolpyruvylshikimate-3-phosphate (EPSP) to yield chorismate, which is the branch point compound that serves as the starting substrate for the three terminal pathways of aromatic amino acid biosynthesis. This reaction introduces a second double bond into the aromatic ring system. In Helicobacter pylori (strain ATCC 700392 / 26695) (Campylobacter pylori), this protein is Chorismate synthase.